Reading from the N-terminus, the 808-residue chain is Probable inorganic carbon transporter subunit DabA (808 aa).

Residues Cys-335, Asp-337, His-497, and Cys-512 each contribute to the Zn(2+) site.

The protein belongs to the inorganic carbon transporter (TC 9.A.2) DabA family. As to quaternary structure, forms a complex with DabB. Requires Zn(2+) as cofactor.

It localises to the cell inner membrane. Functionally, part of an energy-coupled inorganic carbon pump. This Rhodopseudomonas palustris (strain TIE-1) protein is Probable inorganic carbon transporter subunit DabA.